Reading from the N-terminus, the 317-residue chain is Glycerol-3-phosphate dehydrogenase [NAD(P)+] (317 aa).

Residues W20, R40, R41, and K88 each contribute to the NADPH site. Residues K88 and G116 each contribute to the sn-glycerol 3-phosphate site. S120 lines the NADPH pocket. K171, D224, S234, R235, and N236 together coordinate sn-glycerol 3-phosphate. K171 (proton acceptor) is an active-site residue. R235 contributes to the NADPH binding site. E261 lines the NADPH pocket.

This sequence belongs to the NAD-dependent glycerol-3-phosphate dehydrogenase family.

Its subcellular location is the cytoplasm. It carries out the reaction sn-glycerol 3-phosphate + NAD(+) = dihydroxyacetone phosphate + NADH + H(+). The enzyme catalyses sn-glycerol 3-phosphate + NADP(+) = dihydroxyacetone phosphate + NADPH + H(+). It functions in the pathway membrane lipid metabolism; glycerophospholipid metabolism. Functionally, catalyzes the reduction of the glycolytic intermediate dihydroxyacetone phosphate (DHAP) to sn-glycerol 3-phosphate (G3P), the key precursor for phospholipid synthesis. This Synechocystis sp. (strain ATCC 27184 / PCC 6803 / Kazusa) protein is Glycerol-3-phosphate dehydrogenase [NAD(P)+].